Here is a 222-residue protein sequence, read N- to C-terminus: Cytidylate kinase (222 aa).

Residue 11–19 (GPAGAGKST) participates in ATP binding.

Belongs to the cytidylate kinase family. Type 1 subfamily.

It localises to the cytoplasm. The enzyme catalyses CMP + ATP = CDP + ADP. It catalyses the reaction dCMP + ATP = dCDP + ADP. This Desulforamulus reducens (strain ATCC BAA-1160 / DSM 100696 / MI-1) (Desulfotomaculum reducens) protein is Cytidylate kinase.